We begin with the raw amino-acid sequence, 357 residues long: DNA integrity scanning protein DisA (357 aa).

The DAC domain occupies 8–146; the sequence is VKSMINILQL…GNLRYTLKDI (139 aa). ATP contacts are provided by residues glycine 75, leucine 93, and 106–110; that span reads MRHRT.

Belongs to the DisA family. As to quaternary structure, homooctamer. Mg(2+) serves as cofactor.

The catalysed reaction is 2 ATP = 3',3'-c-di-AMP + 2 diphosphate. Functionally, participates in a DNA-damage check-point that is active prior to asymmetric division when DNA is damaged. DisA forms globular foci that rapidly scan along the chromosomes during sporulation, searching for lesions. When a lesion is present, DisA pauses at the lesion site. This triggers a cellular response that culminates in a temporary block in sporulation initiation. Its function is as follows. Also has diadenylate cyclase activity, catalyzing the condensation of 2 ATP molecules into cyclic di-AMP (c-di-AMP). c-di-AMP acts as a signaling molecule that couples DNA integrity with progression of sporulation. The rise in c-di-AMP level generated by DisA while scanning the chromosome, operates as a positive signal that advances sporulation; upon encountering a lesion, the DisA focus arrests at the damaged site and halts c-di-AMP synthesis. This is DNA integrity scanning protein DisA from Bacillus mycoides (strain KBAB4) (Bacillus weihenstephanensis).